Consider the following 437-residue polypeptide: MSTIVSVWAREILDSRGNPTIEVEVSLESGHSGRAAVPSGASTGTREALELRDGDKGRYKGKGVEKAVDNVMGEIAEAVIGLDALRQVQLDNTLLDLDGTDNKERLGANAMLGVSLATARAASSFLGLPLYQYLGGVNAKVLPVPLMNIINGGAHAPNNLDIQEFMIMPIGAATFRDALRMGAETFHTLKALLAADGHVTSVGDEGGFAPNLKSHDEAFKYITRAIEESGYIPGAEIALAIDAAASEFYRDGKYHLAGEGKTFSNSEMTEWLGEFTAKYPLISIEDGLAEGDWEGWGELTYKLGDTVQLVGDDIFVTNPDILAQGIDEGVANSILIKLNQIGTLTETLDTIEMAKQAAYTTVISHRSGETEDHFIADLAVGLNAGQIKTGSLCRSDRLAKYNQLLRIEEDLDDAGIYFGPMIASHFGYEGDEEFEDA.

Residue glutamine 163 participates in (2R)-2-phosphoglycerate binding. The active-site Proton donor is the glutamate 205. Residues aspartate 242, glutamate 285, and aspartate 312 each coordinate Mg(2+). (2R)-2-phosphoglycerate is bound by residues lysine 337, arginine 366, serine 367, and lysine 388. The Proton acceptor role is filled by lysine 337.

This sequence belongs to the enolase family. Requires Mg(2+) as cofactor.

The protein localises to the cytoplasm. It localises to the secreted. Its subcellular location is the cell surface. It catalyses the reaction (2R)-2-phosphoglycerate = phosphoenolpyruvate + H2O. It participates in carbohydrate degradation; glycolysis; pyruvate from D-glyceraldehyde 3-phosphate: step 4/5. In terms of biological role, catalyzes the reversible conversion of 2-phosphoglycerate (2-PG) into phosphoenolpyruvate (PEP). It is essential for the degradation of carbohydrates via glycolysis. The polypeptide is Enolase (Nitratidesulfovibrio vulgaris (strain DP4) (Desulfovibrio vulgaris)).